Consider the following 598-residue polypeptide: Elongation factor 4 (598 aa).

The tr-type G domain maps to 2 to 184; sequence KQIRNFSIIA…RLVKEIPAPE (183 aa). GTP contacts are provided by residues 14 to 19 and 131 to 134; these read DHGKST and NKID.

The protein belongs to the TRAFAC class translation factor GTPase superfamily. Classic translation factor GTPase family. LepA subfamily.

It localises to the cell inner membrane. The enzyme catalyses GTP + H2O = GDP + phosphate + H(+). In terms of biological role, required for accurate and efficient protein synthesis under certain stress conditions. May act as a fidelity factor of the translation reaction, by catalyzing a one-codon backward translocation of tRNAs on improperly translocated ribosomes. Back-translocation proceeds from a post-translocation (POST) complex to a pre-translocation (PRE) complex, thus giving elongation factor G a second chance to translocate the tRNAs correctly. Binds to ribosomes in a GTP-dependent manner. This chain is Elongation factor 4, found in Photorhabdus laumondii subsp. laumondii (strain DSM 15139 / CIP 105565 / TT01) (Photorhabdus luminescens subsp. laumondii).